The sequence spans 643 residues: Inorganic pyrophosphatase TTM1 (643 aa).

The N-terminal 15 residues, 1–15 (MALDSSVALSPRRRH), are a transit peptide targeting the mitochondrion. The region spanning 248–410 (NPTYILKSSK…PHTYIEQIQL (163 aa)) is the CYTH domain. Residues 618–638 (LESSTVPILLGLAIGCVGIFA) form a helical membrane-spanning segment.

It depends on Mg(2+) as a cofactor. Ubiquitously expressed in all tissues, with strong expression detected in senescent leaves.

The protein localises to the mitochondrion outer membrane. It catalyses the reaction diphosphate + H2O = 2 phosphate + H(+). Its function is as follows. Exhibits pyrophosphatase activity with stronger affinity for pyrophosphate (PPi), moderate affinity for ATP and ADP, and weak affinity for tripolyphosphate (PPPi). No activity observed toward uridine substrate. Positively regulates natural and dark-induced leaf senescence. The sequence is that of Inorganic pyrophosphatase TTM1 from Arabidopsis thaliana (Mouse-ear cress).